A 465-amino-acid chain; its full sequence is Ribulose bisphosphate carboxylase large chain (465 aa).

Lys4 is subject to N6,N6,N6-trimethyllysine. 2 residues coordinate substrate: Asn113 and Thr163. Lys165 functions as the Proton acceptor in the catalytic mechanism. Lys167 serves as a coordination point for substrate. Residues Lys191, Asp193, and Glu194 each contribute to the Mg(2+) site. Lys191 is subject to N6-carboxylysine. His284 acts as the Proton acceptor in catalysis. The substrate site is built by Arg285, His317, and Ser369.

Belongs to the RuBisCO large chain family. Type I subfamily. As to quaternary structure, heterohexadecamer of 8 large chains and 8 small chains; disulfide-linked. The disulfide link is formed within the large subunit homodimers. Mg(2+) is required as a cofactor. The disulfide bond which can form in the large chain dimeric partners within the hexadecamer appears to be associated with oxidative stress and protein turnover.

It localises to the plastid. It is found in the chloroplast. The catalysed reaction is 2 (2R)-3-phosphoglycerate + 2 H(+) = D-ribulose 1,5-bisphosphate + CO2 + H2O. It carries out the reaction D-ribulose 1,5-bisphosphate + O2 = 2-phosphoglycolate + (2R)-3-phosphoglycerate + 2 H(+). RuBisCO catalyzes two reactions: the carboxylation of D-ribulose 1,5-bisphosphate, the primary event in carbon dioxide fixation, as well as the oxidative fragmentation of the pentose substrate in the photorespiration process. Both reactions occur simultaneously and in competition at the same active site. The chain is Ribulose bisphosphate carboxylase large chain from Platytheca verticillata.